A 453-amino-acid polypeptide reads, in one-letter code: Ribulose bisphosphate carboxylase large chain (453 aa).

The propeptide occupies 1-2; sequence MS. P3 carries the post-translational modification N-acetylproline. Residue K14 is modified to N6,N6,N6-trimethyllysine. Substrate is bound by residues N123 and T173. Residue K175 is the Proton acceptor of the active site. K177 is a substrate binding site. Residues K201, D203, and E204 each coordinate Mg(2+). K201 is modified (N6-carboxylysine). The Proton acceptor role is filled by H294. 3 residues coordinate substrate: R295, H327, and S379.

This sequence belongs to the RuBisCO large chain family. Type I subfamily. As to quaternary structure, heterohexadecamer of 8 large chains and 8 small chains; disulfide-linked. The disulfide link is formed within the large subunit homodimers. Requires Mg(2+) as cofactor. Post-translationally, the disulfide bond which can form in the large chain dimeric partners within the hexadecamer appears to be associated with oxidative stress and protein turnover.

The protein localises to the plastid. It localises to the chloroplast. The enzyme catalyses 2 (2R)-3-phosphoglycerate + 2 H(+) = D-ribulose 1,5-bisphosphate + CO2 + H2O. It carries out the reaction D-ribulose 1,5-bisphosphate + O2 = 2-phosphoglycolate + (2R)-3-phosphoglycerate + 2 H(+). Its function is as follows. RuBisCO catalyzes two reactions: the carboxylation of D-ribulose 1,5-bisphosphate, the primary event in carbon dioxide fixation, as well as the oxidative fragmentation of the pentose substrate in the photorespiration process. Both reactions occur simultaneously and in competition at the same active site. In Phuopsis stylosa (Caucasian crosswort), this protein is Ribulose bisphosphate carboxylase large chain.